Here is a 129-residue protein sequence, read N- to C-terminus: Protein GLUTAMINE DUMPER 2 (129 aa).

Residues 1–34 (MQTMEGRQYNYQDSINASSSMVVPHSPWHSPVPY) lie on the Extracellular side of the membrane. A helical transmembrane segment spans residues 35–55 (LFGGLAAMLALICVALLILAC). The Cytoplasmic portion of the chain corresponds to 56 to 129 (SYWRLSGSAE…DHNEEEGRRG (74 aa)). The interval 66–89 (RDLEAGDDAKPDNDTNKTKHTEMP) is disordered. The VIMAG signature appears at 94–98 (VIMAG). The interval 106–129 (ATPATRSEQSCTCGDHNEEEGRRG) is disordered. Positions 120 to 129 (DHNEEEGRRG) are enriched in basic and acidic residues.

The protein belongs to the GLUTAMINE DUMPER 1 (TC 9.B.60) family. Expressed in the vascular tissues.

The protein localises to the membrane. Functionally, probable subunit of an amino acid transporter involved in the regulation of the amino acid metabolism. Stimulates amino acid export by activating nonselective amino acid facilitators. This chain is Protein GLUTAMINE DUMPER 2 (GDU2), found in Arabidopsis thaliana (Mouse-ear cress).